A 457-amino-acid chain; its full sequence is V-type ATP synthase beta chain (457 aa).

It belongs to the ATPase alpha/beta chains family.

Its function is as follows. Produces ATP from ADP in the presence of a proton gradient across the membrane. The V-type beta chain is a regulatory subunit. This chain is V-type ATP synthase beta chain, found in Clostridioides difficile (strain 630) (Peptoclostridium difficile).